Reading from the N-terminus, the 1793-residue chain is Transposon Ty1-H Gag-Pol polyprotein (1793 aa).

Composition is skewed to polar residues over residues 1–10, 48–60, and 127–152; these read MESQQLSNYP, TKAN…TPAS, and QSQF…GNTF. 3 disordered regions span residues 1–84, 126–174, and 390–459; these read MESQ…QNGP, PQSQ…PPPM, and GSRN…SKST. The segment covering 153–165 has biased composition (low complexity); it reads TDSSSADSDMTST. The segment at 337-439 is RNA-binding; the sequence is NNGIHINNKV…NSKSKTARAH (103 aa). Residues 440-456 are compositionally biased toward low complexity; that stretch reads NVSTSNNSPSTDNDSIS. The active-site For protease activity; shared with dimeric partner is Asp-499. The tract at residues 621–678 is integrase-type zinc finger-like; the sequence is NVHTSESTRKYPYPFIHRMLAHANAQTIRYSLKNNTITYFNESDVDWSSAIDYQCPDC. Positions 698 to 873 constitute an Integrase catalytic domain; sequence NSYEPFQYLH…AGLDISTLLP (176 aa). Asp-709 and Asp-774 together coordinate Mg(2+). The segment at 996–1208 is disordered; it reads AVSPTDSTPP…SSLGGIGDSN (213 aa). Residues 998–1007 show a composition bias toward low complexity; it reads SPTDSTPPST. The segment covering 1043-1053 has biased composition (polar residues); that stretch reads STPQISDIEST. Basic and acidic residues predominate over residues 1076–1091; the sequence is ESSHASKSKDFRHSDS. 2 stretches are compositionally biased toward polar residues: residues 1092–1120 and 1133–1144; these read YSDN…QTSE and SIDTSSSESNSL. Residues 1216–1250 carry the Bipartite nuclear localization signal motif; that stretch reads KKRSLEDNETEIKVSRDTWNTKNMRSLEPPRSKKR. The 139-residue stretch at 1376-1514 folds into the Reverse transcriptase Ty1/copia-type domain; that stretch reads NNYYITQLDI…DILGLEIKYQ (139 aa). 6 residues coordinate Mg(2+): Asp-1384, Asp-1465, Asp-1466, Asp-1648, Glu-1690, and Asp-1723. One can recognise an RNase H Ty1/copia-type domain in the interval 1648-1790; it reads DASYGNQPYY…IKTFKLLTNK (143 aa).

The capsid protein forms a homotrimer, from which the VLPs are assembled. The protease is a homodimer, whose active site consists of two apposed aspartic acid residues. Post-translationally, initially, virus-like particles (VLPs) are composed of the structural unprocessed proteins Gag and Gag-Pol, and also contain the host initiator methionine tRNA (tRNA(i)-Met) which serves as a primer for minus-strand DNA synthesis, and a dimer of genomic Ty RNA. Processing of the polyproteins occurs within the particle and proceeds by an ordered pathway, called maturation. First, the protease (PR) is released by autocatalytic cleavage of the Gag-Pol polyprotein yielding capsid protein p45 and a Pol-p154 precursor protein. This cleavage is a prerequisite for subsequent processing of Pol-p154 at the remaining sites to release the mature structural and catalytic proteins. Maturation takes place prior to the RT reaction and is required to produce transposition-competent VLPs.

It localises to the cytoplasm. It is found in the nucleus. It catalyses the reaction DNA(n) + a 2'-deoxyribonucleoside 5'-triphosphate = DNA(n+1) + diphosphate. The catalysed reaction is Endonucleolytic cleavage to 5'-phosphomonoester.. Capsid protein (CA) is the structural component of the virus-like particle (VLP), forming the shell that encapsulates the retrotransposons dimeric RNA genome. The particles are assembled from trimer-clustered units and there are holes in the capsid shells that allow for the diffusion of macromolecules. CA also has nucleocapsid-like chaperone activity, promoting primer tRNA(i)-Met annealing to the multipartite primer-binding site (PBS), dimerization of Ty1 RNA and initiation of reverse transcription. In terms of biological role, the aspartyl protease (PR) mediates the proteolytic cleavages of the Gag and Gag-Pol polyproteins after assembly of the VLP. Its function is as follows. Reverse transcriptase/ribonuclease H (RT) is a multifunctional enzyme that catalyzes the conversion of the retro-elements RNA genome into dsDNA within the VLP. The enzyme displays a DNA polymerase activity that can copy either DNA or RNA templates, and a ribonuclease H (RNase H) activity that cleaves the RNA strand of RNA-DNA heteroduplexes during plus-strand synthesis and hydrolyzes RNA primers. The conversion leads to a linear dsDNA copy of the retrotransposon that includes long terminal repeats (LTRs) at both ends. Functionally, integrase (IN) targets the VLP to the nucleus, where a subparticle preintegration complex (PIC) containing at least integrase and the newly synthesized dsDNA copy of the retrotransposon must transit the nuclear membrane. Once in the nucleus, integrase performs the integration of the dsDNA into the host genome. The chain is Transposon Ty1-H Gag-Pol polyprotein (TY1B-H) from Saccharomyces cerevisiae (strain ATCC 204508 / S288c) (Baker's yeast).